Reading from the N-terminus, the 95-residue chain is Envelope glycoprotein N (95 aa).

The signal sequence occupies residues 1–26; it reads MGLMDIHNAVCSLVIGVAILIATSQA. Topologically, residues 27-55 are virion surface; it reads TFVDWGSSITSMGDFWESTCSAVGVSIAF. Residues 56–76 form a helical membrane-spanning segment; the sequence is SSGFSVLFYMGLVAVISALLA. Over 77 to 95 the chain is Intravirion; that stretch reads GSYHACFRLFTADMFKEEW.

It belongs to the herpesviridae glycoprotein N family. As to quaternary structure, interacts (via N-terminus) with gM (via N-terminus). The gM-gN heterodimer forms the gCII complex.

The protein resides in the virion membrane. Its subcellular location is the host membrane. It localises to the host Golgi apparatus. The protein localises to the host trans-Golgi network. In terms of biological role, envelope glycoprotein necessary for proper maturation of gM and modulation of its membrane fusion activity. Also plays a critical role in virion morphogenesis. The polypeptide is Envelope glycoprotein N (Gallus gallus (Chicken)).